Reading from the N-terminus, the 384-residue chain is Succinyl-diaminopimelate desuccinylase (384 aa).

Histidine 71 is a binding site for Zn(2+). Aspartate 73 is an active-site residue. Aspartate 104 contributes to the Zn(2+) binding site. Catalysis depends on glutamate 139, which acts as the Proton acceptor. 3 residues coordinate Zn(2+): glutamate 140, glutamate 168, and histidine 357.

It belongs to the peptidase M20A family. DapE subfamily. Homodimer. It depends on Zn(2+) as a cofactor. The cofactor is Co(2+).

It catalyses the reaction N-succinyl-(2S,6S)-2,6-diaminopimelate + H2O = (2S,6S)-2,6-diaminopimelate + succinate. The protein operates within amino-acid biosynthesis; L-lysine biosynthesis via DAP pathway; LL-2,6-diaminopimelate from (S)-tetrahydrodipicolinate (succinylase route): step 3/3. In terms of biological role, catalyzes the hydrolysis of N-succinyl-L,L-diaminopimelic acid (SDAP), forming succinate and LL-2,6-diaminopimelate (DAP), an intermediate involved in the bacterial biosynthesis of lysine and meso-diaminopimelic acid, an essential component of bacterial cell walls. This Bradyrhizobium sp. (strain BTAi1 / ATCC BAA-1182) protein is Succinyl-diaminopimelate desuccinylase.